We begin with the raw amino-acid sequence, 126 residues long: Holo-[acyl-carrier-protein] synthase (126 aa).

Mg(2+) is bound by residues D9 and E58.

The protein belongs to the P-Pant transferase superfamily. AcpS family. It depends on Mg(2+) as a cofactor.

It localises to the cytoplasm. It catalyses the reaction apo-[ACP] + CoA = holo-[ACP] + adenosine 3',5'-bisphosphate + H(+). Functionally, transfers the 4'-phosphopantetheine moiety from coenzyme A to a Ser of acyl-carrier-protein. In Buchnera aphidicola subsp. Schizaphis graminum (strain Sg), this protein is Holo-[acyl-carrier-protein] synthase.